A 258-amino-acid chain; its full sequence is MADERVSARGGMETSFGFREVGTGEKQPLVNDVFHKVAKRYDIMNDVMSAGLHRVWKDAMIAALNPPGREDYRVLDVAGGTGDIAFRIVERSGRKAHATVLDINGSMLSVGAERARKKGIEANLDFVEANAEDLPFAANSFDAYTIAFGIRNVPRIEVALKEAYRVLKRGGRLLVLEFSEVEMPLLDRFYDAWSFNAIPKFGKLITGDDAPYQYLVESIRKFPNQRDFAAMIRDAGFARVSFTNYTGGIAALHSGWKI.

S-adenosyl-L-methionine-binding positions include T81, D102, and 130–131 (NA).

Belongs to the class I-like SAM-binding methyltransferase superfamily. MenG/UbiE family.

The catalysed reaction is a 2-demethylmenaquinol + S-adenosyl-L-methionine = a menaquinol + S-adenosyl-L-homocysteine + H(+). The enzyme catalyses a 2-methoxy-6-(all-trans-polyprenyl)benzene-1,4-diol + S-adenosyl-L-methionine = a 5-methoxy-2-methyl-3-(all-trans-polyprenyl)benzene-1,4-diol + S-adenosyl-L-homocysteine + H(+). The protein operates within quinol/quinone metabolism; menaquinone biosynthesis; menaquinol from 1,4-dihydroxy-2-naphthoate: step 2/2. It participates in cofactor biosynthesis; ubiquinone biosynthesis. Its function is as follows. Methyltransferase required for the conversion of demethylmenaquinol (DMKH2) to menaquinol (MKH2) and the conversion of 2-polyprenyl-6-methoxy-1,4-benzoquinol (DDMQH2) to 2-polyprenyl-3-methyl-6-methoxy-1,4-benzoquinol (DMQH2). The polypeptide is Ubiquinone/menaquinone biosynthesis C-methyltransferase UbiE (Rhizobium meliloti (strain 1021) (Ensifer meliloti)).